The sequence spans 205 residues: DNA-directed RNA polymerase RPB5 homolog (205 aa).

This sequence belongs to the archaeal RpoH/eukaryotic RPB5 RNA polymerase subunit family. As to quaternary structure, part of the viral DNA-directed RNA polymerase that consists of 8 polII-like subunits (RPB1, RPB2, RPB3, RPB5, RPB6, RPB7, RPB9, RPB10), a capping enzyme and a termination factor.

The protein resides in the host cytoplasm. The protein localises to the virion. Its function is as follows. Component of the DNA-directed RNA polymerase (RNAP) that catalyzes the transcription in the cytoplasm of viral DNA into RNA using the four ribonucleoside triphosphates as substrates. The chain is DNA-directed RNA polymerase RPB5 homolog from Ornithodoros (relapsing fever ticks).